Here is a 267-residue protein sequence, read N- to C-terminus: 4-hydroxy-tetrahydrodipicolinate reductase (267 aa).

Residues 8-13 (GAAGRM) and glutamate 34 each bind NAD(+). Arginine 35 contacts NADP(+). Residues 98–100 (GST) and 122–125 (APNM) each bind NAD(+). Residue histidine 155 is the Proton donor/acceptor of the active site. Position 156 (histidine 156) interacts with (S)-2,3,4,5-tetrahydrodipicolinate. Lysine 159 (proton donor) is an active-site residue. 165–166 (GT) is a (S)-2,3,4,5-tetrahydrodipicolinate binding site.

It belongs to the DapB family.

Its subcellular location is the cytoplasm. The catalysed reaction is (S)-2,3,4,5-tetrahydrodipicolinate + NAD(+) + H2O = (2S,4S)-4-hydroxy-2,3,4,5-tetrahydrodipicolinate + NADH + H(+). The enzyme catalyses (S)-2,3,4,5-tetrahydrodipicolinate + NADP(+) + H2O = (2S,4S)-4-hydroxy-2,3,4,5-tetrahydrodipicolinate + NADPH + H(+). The protein operates within amino-acid biosynthesis; L-lysine biosynthesis via DAP pathway; (S)-tetrahydrodipicolinate from L-aspartate: step 4/4. Catalyzes the conversion of 4-hydroxy-tetrahydrodipicolinate (HTPA) to tetrahydrodipicolinate. In Geotalea uraniireducens (strain Rf4) (Geobacter uraniireducens), this protein is 4-hydroxy-tetrahydrodipicolinate reductase.